The sequence spans 282 residues: Pantothenate synthetase (282 aa).

Residue 30 to 37 participates in ATP binding; it reads MGYLHEGH. The active-site Proton donor is histidine 37. (R)-pantoate is bound at residue glutamine 61. Glutamine 61 provides a ligand contact to beta-alanine. 147-150 serves as a coordination point for ATP; it reads GMKD. Glutamine 153 contributes to the (R)-pantoate binding site. ATP contacts are provided by residues valine 176 and 184-187; that span reads KSSR.

Belongs to the pantothenate synthetase family. Homodimer.

The protein resides in the cytoplasm. It carries out the reaction (R)-pantoate + beta-alanine + ATP = (R)-pantothenate + AMP + diphosphate + H(+). It functions in the pathway cofactor biosynthesis; (R)-pantothenate biosynthesis; (R)-pantothenate from (R)-pantoate and beta-alanine: step 1/1. Catalyzes the condensation of pantoate with beta-alanine in an ATP-dependent reaction via a pantoyl-adenylate intermediate. The sequence is that of Pantothenate synthetase from Bacillus thuringiensis (strain Al Hakam).